The following is a 151-amino-acid chain: UPF0756 membrane protein Moth_0120 (151 aa).

4 helical membrane passes run valine 6–alanine 26, alanine 52–proline 72, methionine 75–threonine 95, and methionine 111–valine 131.

Belongs to the UPF0756 family.

The protein resides in the cell membrane. The sequence is that of UPF0756 membrane protein Moth_0120 from Moorella thermoacetica (strain ATCC 39073 / JCM 9320).